Consider the following 392-residue polypeptide: Large ribosomal subunit protein uL3 (392 aa).

This sequence belongs to the universal ribosomal protein uL3 family. As to quaternary structure, component of the large ribosomal subunit (LSU). Mature N.crassa ribosomes consist of a small (40S) and a large (60S) subunit. The 40S small subunit contains 1 molecule of ribosomal RNA (18S rRNA) and at least 32 different proteins. The large 60S subunit contains 3 rRNA molecules (26S, 5.8S and 5S rRNA) and at least 42 different proteins.

The protein localises to the cytoplasm. Functionally, component of the ribosome, a large ribonucleoprotein complex responsible for the synthesis of proteins in the cell. The small ribosomal subunit (SSU) binds messenger RNAs (mRNAs) and translates the encoded message by selecting cognate aminoacyl-transfer RNA (tRNA) molecules. The large subunit (LSU) contains the ribosomal catalytic site termed the peptidyl transferase center (PTC), which catalyzes the formation of peptide bonds, thereby polymerizing the amino acids delivered by tRNAs into a polypeptide chain. The nascent polypeptides leave the ribosome through a tunnel in the LSU and interact with protein factors that function in enzymatic processing, targeting, and the membrane insertion of nascent chains at the exit of the ribosomal tunnel. The chain is Large ribosomal subunit protein uL3 (rpl-3) from Neurospora crassa (strain ATCC 24698 / 74-OR23-1A / CBS 708.71 / DSM 1257 / FGSC 987).